The chain runs to 76 residues: Conopeptide X11.1 (76 aa).

Positions Met-1–Gly-20 are cleaved as a signal peptide. Positions Glu-21–Arg-39 are excised as a propeptide. 4 disulfides stabilise this stretch: Cys-42-Cys-56, Cys-49-Cys-61, Cys-55-Cys-66, and Cys-60-Cys-73.

In terms of tissue distribution, expressed by the venom duct.

The protein resides in the secreted. Functionally, antimicrobial peptide that potently inhibits growth of Mycobacterium tuberculosis (H37Rv strain) (MIC=3 uM). The sequence is that of Conopeptide X11.1 from Conasprella ximenes (Interrupted cone).